Here is a 210-residue protein sequence, read N- to C-terminus: Putative protein-lysine deacylase ABHD14B (210 aa).

The residue at position 91 (Ser-91) is a Phosphoserine. Catalysis depends on charge relay system residues Ser-111, Asp-162, and His-188.

The protein belongs to the AB hydrolase superfamily. ABHD14 family. As to quaternary structure, may interact with TAF1.

Its subcellular location is the cytoplasm. The protein resides in the nucleus. The catalysed reaction is L-lysyl-[protein] + acetyl-CoA = N(6)-acetyl-L-lysyl-[protein] + CoA + H(+). In terms of biological role, acts as an atypical protein-lysine deacetylase in vitro. Catalyzes the deacetylation of lysine residues using CoA as substrate, generating acetyl-CoA and the free amine of protein-lysine residues. Additional experiments are however required to confirm the protein-lysine deacetylase activity in vivo. Has hydrolase activity towards various surrogate p-nitrophenyl (pNp) substrates, such as pNp-butyrate, pNp-acetate and pNp-octanoate in vitro, with a strong preference for pNp-acetate. May activate transcription. This is Putative protein-lysine deacylase ABHD14B from Rattus norvegicus (Rat).